A 545-amino-acid polypeptide reads, in one-letter code: Probable quinate permease (545 aa).

The Cytoplasmic portion of the chain corresponds to 1-22; it reads MSILSLVEDRPTPKEVYNWRIY. Residues 23 to 43 form a helical membrane-spanning segment; the sequence is LLAAVASFTSCMIGYDSAFIG. Residues 44–66 lie on the Extracellular side of the membrane; that stretch reads TTISLQSFKDEFNWDAMSTDKQN. A helical transmembrane segment spans residues 67-87; that stretch reads LISANIVSLYQAGAFFGAFFA. The Cytoplasmic segment spans residues 88–97; the sequence is YPMGHFWGRR. The helical transmembrane segment at 98 to 118 threads the bilayer; the sequence is WGLFVAALVFTLGAGLMLGAN. Residues 119–130 lie on the Extracellular side of the membrane; sequence GDRGLGLIYGGR. A helical membrane pass occupies residues 131 to 151; it reads VLAGLGVGAGSNITPIYISEL. Residues 152–159 are Cytoplasmic-facing; that stretch reads APPAIRGR. The chain crosses the membrane as a helical span at residues 160-180; the sequence is LVGVYELGWQIGGLVGFWICF. At 181 to 193 the chain is on the extracellular side; the sequence is GVDDTLAPSHKQW. The helical transmembrane segment at 194–214 threads the bilayer; the sequence is IIPFAVQLIPSGLLLLGILFV. Over 215 to 285 the chain is Cytoplasmic; sequence RESPRWLFLR…VWSNKRIMYR (71 aa). A helical transmembrane segment spans residues 286 to 306; the sequence is LFLGSMLFLWQNGSGINAINY. Over 307–325 the chain is Extracellular; it reads YSPTVFKSIGLRGANTSLL. A helical transmembrane segment spans residues 326-346; the sequence is TTGIFGVVKTVVTFVWLLWLI. Residues 347 to 352 lie on the Cytoplasmic side of the membrane; the sequence is DRLGRR. A helical transmembrane segment spans residues 353–373; that stretch reads LLLMIGAAGGSVCLWIVGAYI. Over 374–384 the chain is Extracellular; it reads KVAKPTERDPD. A helical membrane pass occupies residues 385 to 405; sequence APLDGGGIAAMFFFYLWTVFY. At 406 to 457 the chain is on the cytoplasmic side; that stretch reads TPSWNGTPWVMNSEMFDPNVRSLAQACAAGSNWLWNFLISRFTPQMFAKMEY. A helical membrane pass occupies residues 458 to 478; it reads GVYFFFASLMILSIVFVFFLI. The Extracellular segment spans residues 479–545; the sequence is PETKGIPLES…VEQAESVPKA (67 aa). The segment at 520-545 is disordered; the sequence is IEESGYTKSDAQQVERVEQAESVPKA.

The protein belongs to the major facilitator superfamily. Sugar transporter (TC 2.A.1.1) family. Interacts with creB. Ubiquitinated. Deubiquitinated by creB, probably to control its activity or amount.

It is found in the cell membrane. Integral membrane transporter that imports quinic acid to be catabolized as a carbon source. The sequence is that of Probable quinate permease (qutD) from Aspergillus terreus (strain NIH 2624 / FGSC A1156).